Consider the following 145-residue polypeptide: uncharacterized protein (145 aa).

The residue at position 67 (Ser-67) is a Phosphoserine.

Expressed in retina and retinoblastoma.

This is an uncharacterized protein from Homo sapiens (Human).